Consider the following 145-residue polypeptide: D-aminoacyl-tRNA deacylase (145 aa).

The short motif at 137–138 (GP) is the Gly-cisPro motif, important for rejection of L-amino acids element.

Belongs to the DTD family. As to quaternary structure, homodimer.

Its subcellular location is the cytoplasm. The catalysed reaction is glycyl-tRNA(Ala) + H2O = tRNA(Ala) + glycine + H(+). It carries out the reaction a D-aminoacyl-tRNA + H2O = a tRNA + a D-alpha-amino acid + H(+). In terms of biological role, an aminoacyl-tRNA editing enzyme that deacylates mischarged D-aminoacyl-tRNAs. Also deacylates mischarged glycyl-tRNA(Ala), protecting cells against glycine mischarging by AlaRS. Acts via tRNA-based rather than protein-based catalysis; rejects L-amino acids rather than detecting D-amino acids in the active site. By recycling D-aminoacyl-tRNA to D-amino acids and free tRNA molecules, this enzyme counteracts the toxicity associated with the formation of D-aminoacyl-tRNA entities in vivo and helps enforce protein L-homochirality. The protein is D-aminoacyl-tRNA deacylase of Aeromonas hydrophila subsp. hydrophila (strain ATCC 7966 / DSM 30187 / BCRC 13018 / CCUG 14551 / JCM 1027 / KCTC 2358 / NCIMB 9240 / NCTC 8049).